Reading from the N-terminus, the 320-residue chain is Variant surface glycoprotein ILTAT 1.2 (320 aa).

N-linked (GlcNAc...) asparagine glycans are attached at residues N146, N282, and N295. Residues 297 to 320 (TKATENGVPVAQTQTGGSETTTEK) form a disordered region. Positions 308–320 (QTQTGGSETTTEK) are enriched in low complexity.

The protein localises to the cell membrane. Functionally, VSG forms a coat on the surface of the parasite. The trypanosome evades the immune response of the host by expressing a series of antigenically distinct VSGs from an estimated 1000 VSG genes. This Trypanosoma brucei brucei protein is Variant surface glycoprotein ILTAT 1.2.